The sequence spans 71 residues: Plasticin-C2 (71 aa).

Residues 1-22 form the signal peptide; sequence MAFLKKSLLLVLFLALVPLSIC. Residues 23-45 constitute a propeptide that is removed on maturation; that stretch reads EEEKREEEDEEKQEDDDQSENKR. A disordered region spans residues 25–46; sequence EKREEEDEEKQEDDDQSENKRG. Acidic residues predominate over residues 26–40; the sequence is KREEEDEEKQEDDDQ. N68 carries the asparagine amide modification. A propeptide spanning residues 70 to 71 is cleaved from the precursor; the sequence is ES.

Belongs to the frog skin active peptide (FSAP) family. Plasticin subfamily. In terms of tissue distribution, expressed by the skin glands.

Its subcellular location is the secreted. It localises to the target cell membrane. Neutral peptide with no antimicrobial activity. May act in synergy with cationic peptides by enhancing their activity. Has a moderate hemolytic activity. The sequence is that of Plasticin-C2 from Agalychnis callidryas (Red-eyed tree frog).